A 556-amino-acid chain; its full sequence is Formate--tetrahydrofolate ligase 1 (556 aa).

An ATP-binding site is contributed by Thr65–Thr72.

It belongs to the formate--tetrahydrofolate ligase family.

It carries out the reaction (6S)-5,6,7,8-tetrahydrofolate + formate + ATP = (6R)-10-formyltetrahydrofolate + ADP + phosphate. The protein operates within one-carbon metabolism; tetrahydrofolate interconversion. This chain is Formate--tetrahydrofolate ligase 1, found in Desulfitobacterium hafniense (strain Y51).